The following is a 610-amino-acid chain: GATOR complex protein NPRL3 (610 aa).

The residue at position 437 (serine 437) is a Phosphoserine. The tract at residues 474-501 is disordered; sequence REASEDHSSLASDNIAVQPSSSHKSNFS. A compositionally biased stretch (polar residues) spans 482–501; the sequence is SLASDNIAVQPSSSHKSNFS.

The protein belongs to the NPR3 family. In terms of assembly, component of the GATOR complex consisting of mio, Nup44A/Seh1, Im11, Nplr3, Nplr2, Wdr24, Wdr59 and Sec13. Within the GATOR complex, probable component of the GATOR1 subcomplex which is likely composed of Iml1, Nplr2 and Nplr3. Interacts with Nprl2.

It localises to the cytoplasm. The protein localises to the lysosome. An essential component of the GATOR subcomplex GATOR1 which functions as an inhibitor of the amino acid-sensing branch of the TORC1 signaling pathway. The two GATOR subcomplexes, GATOR1 and GATOR2, regulate the TORC1 pathway in order to mediate metabolic homeostasis, female gametogenesis and the response to amino acid limitation and complete starvation. The function of GATOR1 in negatively regulating the TORC1 pathway is essential for maintaining baseline levels of TORC1 activity under nutrient rich conditions, and for promoting survival during amino acid or complete starvation by inhibiting TORC1-dependent cell growth and promoting catabolic metabolism and autophagy. In addition, this inhibition of TORC1 is necessary to maintain female fertility under normal conditions and during periods of nutrient stress. GATOR1 and GATOR2 act at different stages of oogenesis to regulate TORC1 in order to control meiotic entry and promote oocyte growth and development. After exactly four mitotic cyst divisions, the GATOR1 complex members (Iml1, Nprl2 and Nprl3) down-regulate TORC1 to slow cellular metabolism and promote the mitotic/meiotic transition. At later stages of oogenesis, the mio and Nup44A components of the GATOR2 complex inhibit GATOR1 and thus activate TORC1 to promote meiotic progression, and drive oocyte growth and development. In Drosophila melanogaster (Fruit fly), this protein is GATOR complex protein NPRL3.